We begin with the raw amino-acid sequence, 811 residues long: Zinc finger protein 839 (811 aa).

The segment at 197–222 adopts a C2H2-type zinc-finger fold; that stretch reads FKCQTCEKSYIGKGGLARHFKLNPGH. 3 disordered regions span residues 329 to 349, 455 to 555, and 612 to 654; these read QRRA…RASP, PDNL…NGSV, and ALEH…AEAG. Residues 476 to 485 show a composition bias toward basic and acidic residues; the sequence is SSEKREREAA. Polar residues predominate over residues 501–510; it reads SNDTTESLAA.

The sequence is that of Zinc finger protein 839 (ZNF839) from Homo sapiens (Human).